A 484-amino-acid polypeptide reads, in one-letter code: DNA-binding protein (484 aa).

The interval 1-69 (MASNQHSQRE…ESAEEEEAEP (69 aa)) is disordered. Over residues 51–60 (SMAAIPLSPE) the composition is skewed to low complexity. Phosphotyrosine; by host is present on Tyr150. The Zn(2+) site is built by Cys239 and His241. The tract at residues 252-286 (VEMDVTSESGQRALKENPSKAKVAQNRWGRNVVQI) is flexible loop. Residues Cys294, Cys310, Cys351, Cys353, Cys405, and Cys421 each coordinate Zn(2+). Positions 468-484 (ISLPTNHGDCREEPFDF) are C-terminal arm, DBP binding.

Belongs to the adenoviridae E2A DNA-binding protein family. In terms of assembly, homomultimerizes on viral ssDNA bound to pTP. Forms a initiation complex with viral polymerase, pTP and hosts NFIA and POU2F1/OCT1. Interacts with host SRCAP.

It is found in the host nucleus. Plays a role in the elongation phase of viral strand displacement replication by unwinding the template in an ATP-independent fashion, employing its capacity to form multimers. Also enhances the rate of initiation. Released from template upon second strand synthesis. Assembles in complex with viral pTP, viral pol, host NFIA and host POU2F1/OCT1 on viral origin of replication. Covers the whole ssDNA genome during synthesis. The complementary strand synthesis induces its relese from DNA template. May inhibit cellular transcription mediated by the interaction between host SRCAP and CBP. The sequence is that of DNA-binding protein from Human adenovirus A serotype 12 (HAdV-12).